The primary structure comprises 319 residues: tRNA-cytidine(32) 2-sulfurtransferase (319 aa).

The PP-loop motif motif lies at 43 to 48 (SGGKDS). [4Fe-4S] cluster contacts are provided by cysteine 118, cysteine 121, and cysteine 209.

This sequence belongs to the TtcA family. Homodimer. It depends on Mg(2+) as a cofactor. The cofactor is [4Fe-4S] cluster.

It is found in the cytoplasm. The catalysed reaction is cytidine(32) in tRNA + S-sulfanyl-L-cysteinyl-[cysteine desulfurase] + AH2 + ATP = 2-thiocytidine(32) in tRNA + L-cysteinyl-[cysteine desulfurase] + A + AMP + diphosphate + H(+). The protein operates within tRNA modification. Functionally, catalyzes the ATP-dependent 2-thiolation of cytidine in position 32 of tRNA, to form 2-thiocytidine (s(2)C32). The sulfur atoms are provided by the cysteine/cysteine desulfurase (IscS) system. The chain is tRNA-cytidine(32) 2-sulfurtransferase from Neisseria gonorrhoeae (strain NCCP11945).